The sequence spans 241 residues: RxLR effector protein SFI5 (241 aa).

Residues 1–20 (MLRQARPLVVLIAVTFLVAS) form the signal peptide. The RxLR-dEER signature appears at 44–62 (RLLRTHHATIKVNADSEER).

This sequence belongs to the RxLR effector family.

The protein resides in the secreted. It is found in the host cell membrane. Functionally, effector that suppresses flg22-induced post-translational MAP kinase activation in tomato but not in Arabidopsis. The perception of highly conserved pathogen- or microbe-associated molecular patterns (PAMPs/MAMPs), such as flg22, triggers converging signaling pathways recruiting MAP kinase cascades and inducing transcriptional re-programming, yielding a generic antimicrobial response. The protein is RxLR effector protein SFI5 of Phytophthora infestans (strain T30-4) (Potato late blight agent).